We begin with the raw amino-acid sequence, 98 residues long: Acylphosphatase (98 aa).

The Acylphosphatase-like domain maps to 12–98 (TYYVRVRGVV…DKRFERFQQH (87 aa)). Active-site residues include Arg-27 and Asn-45.

The protein belongs to the acylphosphatase family.

It catalyses the reaction an acyl phosphate + H2O = a carboxylate + phosphate + H(+). This Burkholderia mallei (strain NCTC 10247) protein is Acylphosphatase (acyP).